A 179-amino-acid polypeptide reads, in one-letter code: Probable chorismate pyruvate-lyase (179 aa).

3 residues coordinate substrate: R82, L120, and E165.

Belongs to the UbiC family.

The protein resides in the cytoplasm. It catalyses the reaction chorismate = 4-hydroxybenzoate + pyruvate. The protein operates within cofactor biosynthesis; ubiquinone biosynthesis. Functionally, removes the pyruvyl group from chorismate, with concomitant aromatization of the ring, to provide 4-hydroxybenzoate (4HB) for the ubiquinone pathway. The sequence is that of Probable chorismate pyruvate-lyase from Vibrio vulnificus (strain CMCP6).